Consider the following 306-residue polypeptide: MANTWWEIQILCESALEDSVSWRLEDFGCRGTASESKGDSCLVKGYLPIFQAQLLDLAALGLWLQQDALCIGLSSPTLTWQLIDEEDWASSWKQYWHPQEIGDRFLINPAWLPSPENYDRLVIRLDPGVAFGTGNHATTQLCLESLEMRLSQVPKSFVSKDAGQEPVIIADIGCGSGILSIGAILLGAEKVYAVDTDPLAVQSTFSNRALNEVNPERLVPAEGSVDILKKLIERPVDGIVCNILADVIIQLVPEISEISKPSTWAIFSGILVEQSTSVVEALEKHGWVVATMWKRKEWCCLNVRRT.

4 residues coordinate S-adenosyl-L-methionine: T139, G173, D195, and N242.

This sequence belongs to the methyltransferase superfamily. PrmA family.

The protein localises to the cytoplasm. It carries out the reaction L-lysyl-[protein] + 3 S-adenosyl-L-methionine = N(6),N(6),N(6)-trimethyl-L-lysyl-[protein] + 3 S-adenosyl-L-homocysteine + 3 H(+). Functionally, methylates ribosomal protein L11. The polypeptide is Ribosomal protein L11 methyltransferase (Trichormus variabilis (strain ATCC 29413 / PCC 7937) (Anabaena variabilis)).